A 424-amino-acid polypeptide reads, in one-letter code: MAKIVVTGGQALQGEVNISGAKNAVLPILCATLLADAPVQISNVPHLHDVITMVKLLSELGAEVTIDEGTLAKGRSILVDPRSVTHQIAPYELVKTMRASILVLGPLLARYGTAEVSLPGGCAIGSRPVDQHIKGLQALGAEISVENGYIKATSHGRLKGGRYVFDMVSVTGTENVLMAAVLAEGTTVLENAAMEPEVTDLADCMIALGAQIEGAGTPRIVVQGVQRLGGGHHAVLPDRIETGTFLVAAAMTGGSVTVRRARPETLDAMLDKLTEAGATITTTADSITLDMQGKRPRAVSLTTAPYPAFPTDMQAQFMALNCVADGVGVINETIFENRFMHVNELLRLGADIQVEGHTAIVRGAARLSGAPVMATDLRASASLILAGLVADGDTTIDRIYHLDRGYENIEEKLGALGATIQRTA.

22-23 provides a ligand contact to phosphoenolpyruvate; that stretch reads KN. Arg98 is a UDP-N-acetyl-alpha-D-glucosamine binding site. Cys122 (proton donor) is an active-site residue. Cys122 carries the 2-(S-cysteinyl)pyruvic acid O-phosphothioketal modification. UDP-N-acetyl-alpha-D-glucosamine-binding positions include 127 to 131, Asp312, and Ile334; that span reads RPVDQ.

It belongs to the EPSP synthase family. MurA subfamily.

The protein resides in the cytoplasm. It carries out the reaction phosphoenolpyruvate + UDP-N-acetyl-alpha-D-glucosamine = UDP-N-acetyl-3-O-(1-carboxyvinyl)-alpha-D-glucosamine + phosphate. The protein operates within cell wall biogenesis; peptidoglycan biosynthesis. Cell wall formation. Adds enolpyruvyl to UDP-N-acetylglucosamine. In Xanthomonas oryzae pv. oryzae (strain MAFF 311018), this protein is UDP-N-acetylglucosamine 1-carboxyvinyltransferase.